Consider the following 257-residue polypeptide: Beta-fibrinogenase mucrofibrase-1 (257 aa).

The signal sequence occupies residues 1-18; sequence MVLIRVLANLLILQLSYA. A propeptide spanning residues 19–24 is cleaved from the precursor; sequence QKSSEL. One can recognise a Peptidase S1 domain in the interval 25–248; the sequence is VIGGDECNIN…HLDWIKGIIA (224 aa). 6 disulfide bridges follow: C31-C162, C49-C65, C97-C255, C141-C209, C173-C188, and C199-C224. Residues H64 and D109 each act as charge relay system in the active site. The Charge relay system role is filled by S203.

The protein belongs to the peptidase S1 family. Snake venom subfamily. Monomer. As to expression, expressed by the venom gland.

The protein resides in the secreted. Functionally, snake venom serine protease with strong beta-fibrinogenolytic activities, angiotensin I (AGT)-degrading activities and strong kallikrein-like activities in vitro, releasing bradykinin from kininogen (KNG1). Intravenous injection strongly lowers blood pressure in experimental rats, which may be explained by the action on angiotensin I and kininogen. This is Beta-fibrinogenase mucrofibrase-1 from Protobothrops mucrosquamatus (Taiwan habu).